The following is a 612-amino-acid chain: Dihydroxy-acid dehydratase (612 aa).

Asp-81 provides a ligand contact to Mg(2+). Residue Cys-122 coordinates [2Fe-2S] cluster. The Mg(2+) site is built by Asp-123 and Lys-124. An N6-carboxylysine modification is found at Lys-124. Cys-196 serves as a coordination point for [2Fe-2S] cluster. Residue Glu-492 coordinates Mg(2+). Ser-518 acts as the Proton acceptor in catalysis.

It belongs to the IlvD/Edd family. As to quaternary structure, homodimer. [2Fe-2S] cluster serves as cofactor. It depends on Mg(2+) as a cofactor.

It catalyses the reaction (2R)-2,3-dihydroxy-3-methylbutanoate = 3-methyl-2-oxobutanoate + H2O. The enzyme catalyses (2R,3R)-2,3-dihydroxy-3-methylpentanoate = (S)-3-methyl-2-oxopentanoate + H2O. The protein operates within amino-acid biosynthesis; L-isoleucine biosynthesis; L-isoleucine from 2-oxobutanoate: step 3/4. It functions in the pathway amino-acid biosynthesis; L-valine biosynthesis; L-valine from pyruvate: step 3/4. Functionally, functions in the biosynthesis of branched-chain amino acids. Catalyzes the dehydration of (2R,3R)-2,3-dihydroxy-3-methylpentanoate (2,3-dihydroxy-3-methylvalerate) into 2-oxo-3-methylpentanoate (2-oxo-3-methylvalerate) and of (2R)-2,3-dihydroxy-3-methylbutanoate (2,3-dihydroxyisovalerate) into 2-oxo-3-methylbutanoate (2-oxoisovalerate), the penultimate precursor to L-isoleucine and L-valine, respectively. This Cereibacter sphaeroides (strain ATCC 17029 / ATH 2.4.9) (Rhodobacter sphaeroides) protein is Dihydroxy-acid dehydratase.